The following is a 286-amino-acid chain: 2-hydroxy-6-oxo-6-phenylhexa-2,4-dienoate hydrolase (286 aa).

The region spanning 36-271 (VIMLHGGGPG…RCGHWAQWEH (236 aa)) is the AB hydrolase-1 domain. Substrate contacts are provided by residues 42-43 (GG), Asn51, Asn111, Ser180, and Arg190. His265 functions as the Proton acceptor in the catalytic mechanism. Trp266 provides a ligand contact to substrate.

The protein belongs to the AB hydrolase superfamily. BphD family. As to quaternary structure, homodimer.

The catalysed reaction is 2,6-dioxo-6-phenylhexa-3-enoate + H2O = 2-oxopent-4-enoate + benzoate + H(+). The protein operates within xenobiotic degradation; biphenyl degradation; 2-hydroxy-2,4-pentadienoate and benzoate from biphenyl: step 4/4. Functionally, catalyzes an unusual C-C bond hydrolysis of 2-hydroxy-6-oxo-6-phenylhexa-2,4-dienoic acid (HOPDA) to produce benzoic acid and 2-hydroxy-2,4-pentadienoic acid (HPD). In Burkholderia cepacia (Pseudomonas cepacia), this protein is 2-hydroxy-6-oxo-6-phenylhexa-2,4-dienoate hydrolase.